The chain runs to 207 residues: Low-molecular weight cobalt-containing nitrile hydratase subunit alpha (207 aa).

Positions 109, 112, 113, and 114 each coordinate Co(3+).

This sequence belongs to the nitrile hydratase subunit alpha family. Heterodimer of an alpha and a beta chain. It depends on Co(3+) as a cofactor.

The enzyme catalyses an aliphatic primary amide = an aliphatic nitrile + H2O. In terms of biological role, NHase catalyzes the hydration of various nitrile compounds to the corresponding amides. The sequence is that of Low-molecular weight cobalt-containing nitrile hydratase subunit alpha from Rhodococcus rhodochrous.